The primary structure comprises 942 residues: Isoleucine--tRNA ligase (942 aa).

Residues 58-68 (PYANGDIHIGH) carry the 'HIGH' region motif. Glu-566 provides a ligand contact to L-isoleucyl-5'-AMP. The 'KMSKS' region motif lies at 607 to 611 (KMSKS). Lys-610 contributes to the ATP binding site. Residues Cys-905, Cys-908, Cys-925, and Cys-928 each coordinate Zn(2+).

It belongs to the class-I aminoacyl-tRNA synthetase family. IleS type 1 subfamily. Monomer. Zn(2+) is required as a cofactor.

It localises to the cytoplasm. The catalysed reaction is tRNA(Ile) + L-isoleucine + ATP = L-isoleucyl-tRNA(Ile) + AMP + diphosphate. In terms of biological role, catalyzes the attachment of isoleucine to tRNA(Ile). As IleRS can inadvertently accommodate and process structurally similar amino acids such as valine, to avoid such errors it has two additional distinct tRNA(Ile)-dependent editing activities. One activity is designated as 'pretransfer' editing and involves the hydrolysis of activated Val-AMP. The other activity is designated 'posttransfer' editing and involves deacylation of mischarged Val-tRNA(Ile). The polypeptide is Isoleucine--tRNA ligase (Pseudoalteromonas atlantica (strain T6c / ATCC BAA-1087)).